The primary structure comprises 79 residues: Gas vesicle protein A2 (79 aa).

The tract at residues 9–19 is alpha helix 1; that stretch reads LAEVLDRVLDK. Residues 23-31 are beta-strand 1; it reads VDVWARISL. Residues 32 to 34 form a beta turn region; that stretch reads VGI. The tract at residues 35-43 is beta-strand 2; sequence EILTVEARV. Positions 48–67 are alpha helix 2; that stretch reads VDTFLHYAEEIAKIEQAELT.

The protein belongs to the gas vesicle GvpA family. The gas vesicle shell is 2 nm thick and consists of a single layer of this protein. It forms helical ribs nearly perpendicular to the long axis of the vesicle.

It is found in the gas vesicle shell. In terms of biological role, gas vesicles are hollow, gas filled proteinaceous nanostructures found in several microbial planktonic microorganisms. They allow positioning of halobacteria at the optimal depth for growth in the poorly aerated shallow brine pools of their habitat. GvpA forms the gas vesicle shell. This protein can replace the p-gvpA gene in the p-vac locus and increases the critical collapse pressure (CCP) of hybrid gas vesicles from 0.66 MPa to 0.90 MPa. In stationary phase gas vesicles about 30 times more GvpA1 is found than GvpA2. Its function is as follows. Expression of 2 c-vac DNA fragments containing 2 divergently transcribed regions (gvpE-gvpF-gvpG-gvpH-gvpI-gvpJ-gvpK-gvpL-gvpM and gvpA-gvpC-gvpN-gvpO) allows H.volcanii to produce gas vesicles. All site-directed mutagenesis is tested in H.volcanii. The polypeptide is Gas vesicle protein A2 (Halobacterium salinarum (strain ATCC 700922 / JCM 11081 / NRC-1) (Halobacterium halobium)).